A 1873-amino-acid polypeptide reads, in one-letter code: Kinesin-related protein 8 (1873 aa).

The Kinesin motor domain maps to cysteine 13 to isoleucine 413. Residue glycine 93–threonine 100 coordinates ATP. Disordered regions lie at residues asparagine 231–asparagine 302, valine 463–serine 567, leucine 778–aspartate 797, lysine 841–threonine 891, lysine 930–leucine 1008, proline 1179–serine 1207, leucine 1244–serine 1267, threonine 1328–serine 1360, and asparagine 1403–aspartate 1467. Positions serine 232–serine 247 are enriched in low complexity. The span at isoleucine 280–serine 297 shows a compositional bias: acidic residues. Residues threonine 473 to serine 567 are compositionally biased toward low complexity. Positions phenylalanine 715–valine 933 form a coiled coil. Low complexity-rich tracts occupy residues isoleucine 937 to threonine 1005, leucine 1182 to glutamine 1200, leucine 1244 to glutamine 1254, asparagine 1348 to asparagine 1358, and serine 1423 to asparagine 1454. 5 WD repeats span residues glycine 1506–aspartate 1546, serine 1548–leucine 1587, isoleucine 1589–lysine 1628, histidine 1636–lysine 1673, and proline 1677–asparagine 1714. A disordered region spans residues asparagine 1758–serine 1780. WD repeat units lie at residues alanine 1805 to leucine 1842 and glycine 1844 to cysteine 1873.

It belongs to the TRAFAC class myosin-kinesin ATPase superfamily. Kinesin family.

It is found in the cytoplasm. The protein resides in the cytoskeleton. In terms of biological role, microtubule-associated force-producing protein that plays a role in organelle transport. Its motor activity is directed toward the microtubule's plus end. Cooperates with kif10 and dynein to organize interphase microtubules. In Dictyostelium discoideum (Social amoeba), this protein is Kinesin-related protein 8 (kif8).